Here is a 647-residue protein sequence, read N- to C-terminus: Chaperone protein HtpG (647 aa).

Residues 1 to 353 form an a; substrate-binding region; it reads MNAHVEQLEF…AQDMSLNVSR (353 aa). The b stretch occupies residues 354-567; that stretch reads EILQQDRQIK…AFGMTPALAR (214 aa). A c region spans residues 568–647; the sequence is IYRASGQEVP…LLAERLARTL (80 aa).

It belongs to the heat shock protein 90 family. Homodimer.

The protein localises to the cytoplasm. Functionally, molecular chaperone. Has ATPase activity. The chain is Chaperone protein HtpG from Mycobacterium bovis (strain ATCC BAA-935 / AF2122/97).